The sequence spans 142 residues: MFIGEYNHALDTKNRIIIPSKFREELGDNFILTKGLDGCLYVYPLGEWKVLEEKLKKLPLTNHNARAFVRFFFSGANEVSLDKQGRVLVPQNLIEYASINKEIISIGVSTRIEIWSKEKWVEYNESSVDMNAIAEKMSELGI.

SpoVT-AbrB domains follow at residues 5 to 47 and 76 to 119; these read EYNH…PLGE and ANEV…SKEK.

Belongs to the MraZ family. As to quaternary structure, forms oligomers.

The protein resides in the cytoplasm. The protein localises to the nucleoid. This is Transcriptional regulator MraZ from Clostridium acetobutylicum (strain ATCC 824 / DSM 792 / JCM 1419 / IAM 19013 / LMG 5710 / NBRC 13948 / NRRL B-527 / VKM B-1787 / 2291 / W).